A 223-amino-acid chain; its full sequence is UPF0441 protein YgiB (223 aa).

Residues 178–195 are compositionally biased toward low complexity; sequence TVPKTAMAPKPATTTTVT. Positions 178–223 are disordered; it reads TVPKTAMAPKPATTTTVTRGGFGESVAKQSTMQRSAAGTSTRSMGG. A compositionally biased stretch (polar residues) spans 204–223; that stretch reads AKQSTMQRSAAGTSTRSMGG.

Belongs to the UPF0441 family.

In Salmonella paratyphi A (strain ATCC 9150 / SARB42), this protein is UPF0441 protein YgiB.